Reading from the N-terminus, the 137-residue chain is Protein shisa-5 (137 aa).

A helical membrane pass occupies residues 3–23 (FGATLAVGLTIFVLSVVTIII).

The protein belongs to the shisa family. Interacts with PDCD6; PDCD6 can stabilize SHISA5.

The protein resides in the endoplasmic reticulum membrane. It localises to the nucleus membrane. In terms of biological role, can induce apoptosis in a caspase-dependent manner and plays a role in p53/TP53-dependent apoptosis. This chain is Protein shisa-5 (SHISA5), found in Pongo abelii (Sumatran orangutan).